The sequence spans 261 residues: Small ribosomal subunit protein eS1B (261 aa).

Residues 1–18 show a composition bias toward basic residues; the sequence is MTLGKNKRISKGGKRGKK. Residues 1-23 form a disordered region; the sequence is MTLGKNKRISKGGKRGKKKAQET.

It belongs to the eukaryotic ribosomal protein eS1 family. As to quaternary structure, component of the small ribosomal subunit. Mature ribosomes consist of a small (40S) and a large (60S) subunit. The 40S subunit contains about 33 different proteins and 1 molecule of RNA (18S). The 60S subunit contains about 49 different proteins and 3 molecules of RNA (25S, 5.8S and 5S).

The protein localises to the cytoplasm. This is Small ribosomal subunit protein eS1B from Trypanosoma cruzi (strain CL Brener).